The primary structure comprises 166 residues: Protein SprT (166 aa).

Residues 19-164 (RDALARANLK…CVRCGDTLVA (146 aa)) form the SprT-like domain. Histidine 78 is a binding site for Zn(2+). The active site involves glutamate 79. Histidine 82 lines the Zn(2+) pocket.

Belongs to the SprT family. The cofactor is Zn(2+).

The protein resides in the cytoplasm. The chain is Protein SprT from Cronobacter sakazakii (strain ATCC BAA-894) (Enterobacter sakazakii).